We begin with the raw amino-acid sequence, 839 residues long: Eukaryotic translation initiation factor 3 subunit C (839 aa).

Residues 1–93 are disordered; sequence MSRFFVAGYN…DSDSEDEGRR (93 aa). Acidic residues-rich tracts occupy residues 14–27 and 34–58; these read SSEE…DEEL and GEQE…SDSD. In terms of domain architecture, PCI spans 585-759; sequence FHQHINLELL…AFIQFASTEP (175 aa). The segment at 783-839 is disordered; sequence EKTSSNGYGKKQPQQQQQQQQQQQQQQQQQKDLLQEDNSRFRYANVNTNNDEFQTTA. The span at 794-812 shows a compositional bias: low complexity; that stretch reads QPQQQQQQQQQQQQQQQQQ. The segment covering 827-839 has biased composition (polar residues); it reads NVNTNNDEFQTTA.

It belongs to the eIF-3 subunit C family. In terms of assembly, component of the eukaryotic translation initiation factor 3 (eIF-3) complex.

The protein resides in the cytoplasm. Component of the eukaryotic translation initiation factor 3 (eIF-3) complex, which is involved in protein synthesis of a specialized repertoire of mRNAs and, together with other initiation factors, stimulates binding of mRNA and methionyl-tRNAi to the 40S ribosome. The eIF-3 complex specifically targets and initiates translation of a subset of mRNAs involved in cell proliferation. This chain is Eukaryotic translation initiation factor 3 subunit C, found in Scheffersomyces stipitis (strain ATCC 58785 / CBS 6054 / NBRC 10063 / NRRL Y-11545) (Yeast).